A 388-amino-acid chain; its full sequence is Chorismate synthase (388 aa).

Residues arginine 39 and arginine 45 each coordinate NADP(+). FMN-binding positions include 130 to 132 (RSS), 251 to 252 (NA), glycine 296, 311 to 315 (KPIPT), and arginine 337.

Belongs to the chorismate synthase family. As to quaternary structure, homotetramer. The cofactor is FMNH2.

The enzyme catalyses 5-O-(1-carboxyvinyl)-3-phosphoshikimate = chorismate + phosphate. It participates in metabolic intermediate biosynthesis; chorismate biosynthesis; chorismate from D-erythrose 4-phosphate and phosphoenolpyruvate: step 7/7. In terms of biological role, catalyzes the anti-1,4-elimination of the C-3 phosphate and the C-6 proR hydrogen from 5-enolpyruvylshikimate-3-phosphate (EPSP) to yield chorismate, which is the branch point compound that serves as the starting substrate for the three terminal pathways of aromatic amino acid biosynthesis. This reaction introduces a second double bond into the aromatic ring system. This Streptococcus pneumoniae serotype 2 (strain D39 / NCTC 7466) protein is Chorismate synthase.